A 445-amino-acid polypeptide reads, in one-letter code: Adenylosuccinate synthetase (445 aa).

Residues 24-30 (GDEGKGK) and 52-54 (GHT) each bind GTP. Asp25 (proton acceptor) is an active-site residue. Asp25 and Gly52 together coordinate Mg(2+). IMP-binding positions include 25-28 (DEGK), 50-53 (NAGH), Thr147, Arg161, Asn238, Thr253, and Arg317. His53 (proton donor) is an active-site residue. 313 to 319 (TTTGRRR) contributes to the substrate binding site. GTP is bound by residues Arg319, 345 to 347 (KLD), and 427 to 429 (GVG).

It belongs to the adenylosuccinate synthetase family. In terms of assembly, homodimer. The cofactor is Mg(2+).

It is found in the cytoplasm. The enzyme catalyses IMP + L-aspartate + GTP = N(6)-(1,2-dicarboxyethyl)-AMP + GDP + phosphate + 2 H(+). The protein operates within purine metabolism; AMP biosynthesis via de novo pathway; AMP from IMP: step 1/2. Plays an important role in the de novo pathway and in the salvage pathway of purine nucleotide biosynthesis. Catalyzes the first committed step in the biosynthesis of AMP from IMP. The protein is Adenylosuccinate synthetase of Malassezia globosa (strain ATCC MYA-4612 / CBS 7966) (Dandruff-associated fungus).